The chain runs to 153 residues: Small ribosomal subunit protein bS16 (153 aa).

It belongs to the bacterial ribosomal protein bS16 family.

This chain is Small ribosomal subunit protein bS16, found in Leifsonia xyli subsp. xyli (strain CTCB07).